A 320-amino-acid chain; its full sequence is Foldase protein PrsA (320 aa).

The first 20 residues, 1–20 (MKMINKLIVPVTASALLLGA), serve as a signal peptide directing secretion. C21 carries N-palmitoyl cysteine lipidation. A lipid anchor (S-diacylglycerol cysteine) is attached at C21. The PpiC domain occupies 139-245 (EDSKKASHIL…FGYHIIKADK (107 aa)). A disordered region spans residues 159–198 (EGLDDKEAKQKAEEIQKEVSKDPSKFGEIAKKESMDTGSA).

It belongs to the PrsA family.

It localises to the cell membrane. The enzyme catalyses [protein]-peptidylproline (omega=180) = [protein]-peptidylproline (omega=0). Functionally, plays a major role in protein secretion by helping the post-translocational extracellular folding of several secreted proteins. The chain is Foldase protein PrsA from Staphylococcus aureus (strain Mu3 / ATCC 700698).